The primary structure comprises 199 residues: V-set and transmembrane domain-containing protein 5 (199 aa).

Positions 1 to 27 (MRPPRCVGRTQGIPLGLLAFWVATARC) are cleaved as a signal peptide. Topologically, residues 28–146 (LQSQGVSLYI…VSEIRYEDLH (119 aa)) are extracellular. Positions 36–138 (YIPRSAINAT…QSGTILLHVS (103 aa)) constitute an Ig-like C2-type domain. N-linked (GlcNAc...) asparagine glycosylation is found at N43, N87, and N101. Residues 147 to 167 (FVAVFFALLAAVAVVLISLMW) form a helical membrane-spanning segment. The Cytoplasmic segment spans residues 168 to 199 (VCNQCAYKFQRKRRYKLRESTTEEIEMKDVEC). The segment at 169-185 (CNQCAYKFQRKRRYKLR) is important for CDC42-dependent filopodia induction.

Can homooligomerize through cis interactions within the same cell membrane. Post-translationally, N-glycosylated.

Its subcellular location is the cell membrane. It localises to the cell projection. It is found in the dendrite. The protein localises to the axon. Its function is as follows. Cell adhesion-like membrane protein of the central nervous system (CNS) which modulates both the position and complexity of central neurons by altering their membrane morphology and dynamics. Involved in the formation of neuronal dendrites and protrusions including dendritic filopodia. In synaptogenesis, regulates synapse formation by altering dendritic spine morphology and actin distribution. Promotes formation of unstable neuronal spines such as thin and branched types. Regulates neuronal morphogenesis and migration during cortical development in the brain. The chain is V-set and transmembrane domain-containing protein 5 (Vstm5) from Rattus norvegicus (Rat).